Reading from the N-terminus, the 132-residue chain is Ribosome-binding factor A (132 aa).

It belongs to the RbfA family. Monomer. Binds 30S ribosomal subunits, but not 50S ribosomal subunits or 70S ribosomes.

The protein localises to the cytoplasm. In terms of biological role, one of several proteins that assist in the late maturation steps of the functional core of the 30S ribosomal subunit. Associates with free 30S ribosomal subunits (but not with 30S subunits that are part of 70S ribosomes or polysomes). Required for efficient processing of 16S rRNA. May interact with the 5'-terminal helix region of 16S rRNA. This Pasteurella multocida (strain Pm70) protein is Ribosome-binding factor A.